Here is a 434-residue protein sequence, read N- to C-terminus: Ribosomal protein uS12 methylthiotransferase RimO (434 aa).

The 111-residue stretch at 2 to 112 folds into the MTTase N-terminal domain; the sequence is AKIGFVSLGC…VLEAVQEVLP (111 aa). Cys11, Cys47, Cys76, Cys142, Cys146, and Cys149 together coordinate [4Fe-4S] cluster. A Radical SAM core domain is found at 128–365; it reads LTPRHYAYVK…LEVQARVSLR (238 aa). The TRAM domain maps to 368–434; it reads QRFVGKTLEV…DTYDLHGVQA (67 aa).

The protein belongs to the methylthiotransferase family. RimO subfamily. The cofactor is [4Fe-4S] cluster.

It localises to the cytoplasm. The enzyme catalyses L-aspartate(89)-[ribosomal protein uS12]-hydrogen + (sulfur carrier)-SH + AH2 + 2 S-adenosyl-L-methionine = 3-methylsulfanyl-L-aspartate(89)-[ribosomal protein uS12]-hydrogen + (sulfur carrier)-H + 5'-deoxyadenosine + L-methionine + A + S-adenosyl-L-homocysteine + 2 H(+). Its function is as follows. Catalyzes the methylthiolation of an aspartic acid residue of ribosomal protein uS12. The polypeptide is Ribosomal protein uS12 methylthiotransferase RimO (Thermus thermophilus (strain ATCC BAA-163 / DSM 7039 / HB27)).